The chain runs to 477 residues: UDP-N-acetylmuramate--L-alanine ligase (477 aa).

Residue 112–118 (GAHGKTT) participates in ATP binding.

The protein belongs to the MurCDEF family.

Its subcellular location is the cytoplasm. The enzyme catalyses UDP-N-acetyl-alpha-D-muramate + L-alanine + ATP = UDP-N-acetyl-alpha-D-muramoyl-L-alanine + ADP + phosphate + H(+). Its pathway is cell wall biogenesis; peptidoglycan biosynthesis. Its function is as follows. Cell wall formation. In Acidovorax ebreus (strain TPSY) (Diaphorobacter sp. (strain TPSY)), this protein is UDP-N-acetylmuramate--L-alanine ligase.